The sequence spans 396 residues: DNA-directed RNA polymerase subunit 6 (396 aa).

Disordered regions lie at residues M1–D137 and N290–E396. Composition is skewed to acidic residues over residues E21 to N53, I76 to G88, and E97 to D137. Polar residues predominate over residues N290 to V312. Low complexity-rich tracts occupy residues S313–N338 and N346–G366. Over residues S367–K380 the composition is skewed to basic residues. Over residues N385 to E396 the composition is skewed to acidic residues.

This sequence belongs to the archaeal Rpo6/eukaryotic RPB6 RNA polymerase subunit family.

It catalyses the reaction RNA(n) + a ribonucleoside 5'-triphosphate = RNA(n+1) + diphosphate. Its function is as follows. DNA-dependent RNA polymerase catalyzes the transcription of DNA into RNA using the four ribonucleoside triphosphates as substrates. In Acanthamoeba polyphaga (Amoeba), this protein is DNA-directed RNA polymerase subunit 6.